The chain runs to 690 residues: MAKKNAIQDFSGEIGIAALVVAVVALMVLPLPTMLIDALLGLNITLSVVLLMVTMYIPSATSLSAFPSLLLFTTLLRLSLNIASTKSILLHADAGHIIESFGKLVVGGNLVVGLVVFLIITTVQFIVIAKGSERVAEVGARFTLDAMPGKQMSIDADLRAGHLSPEEARKRRALLAMESQLHGGMDGAMKFVKGDAIAGLVITLVNILAGIVIGITYHNMTAGEAANRFAVLSIGDAMVSQIPSLLISVAAGVMITRVSDEEQAHKQSSLGMEIVRQLSTSARAMFTASALLMGFALVPGFPSFLFVALATLIFVFGYTLRNRAKEGDGDEGDALPALLREGSKGKAPTIAEQAPSFTVPVGVRLGAELAKGLDVPALDTAFQQGRHALAEALGLPFPGIAIWKADALQPDSYEVRVHDIPGEPVAVPDGHLLIPDLPEALRAQAVEAAGLPNHPAPHWIAPAHVAQDAALSATGQRVERVIADHVVHVLRRSAHLFVGLQETQWMLERVTTDYPGLVAEAQKAVPAQRIADVLRRLLEEQVPIRNMRAILESLVVWGPKEKDTLMLVEYVRGDLGRQIAHQATGGTRQMPAILLDLSVEQTVRQAIKPTPAGNFLTLDPQQVEAIIMRLRGIMQGNPVETPSALAIVTSMDIRRYVRRMIEPHLQALNVYSFQELGGYVDLRPVGKLVL.

Helical transmembrane passes span 14-36 (IGIAALVVAVVALMVLPLPTMLI), 48-72 (VVLLMVTMYIPSATSLSAFPSLLLF), 104-128 (LVVGGNLVVGLVVFLIITTVQFIVI), 196-216 (AIAGLVITLVNILAGIVIGIT), 229-253 (FAVLSIGDAMVSQIPSLLISVAAGV), and 291-315 (LLMGFALVPGFPSFLFVALATLIFV).

Belongs to the FHIPEP (flagella/HR/invasion proteins export pore) family.

The protein resides in the cell inner membrane. In terms of biological role, involved in the secretion of PopA, a proteinaceous elicitor of the hypersensitivity response in plants. In Ralstonia nicotianae (strain ATCC BAA-1114 / GMI1000) (Ralstonia solanacearum), this protein is Hypersensitivity response secretion protein HrcV (hrcV).